We begin with the raw amino-acid sequence, 420 residues long: D-tagatose-1,6-bisphosphate aldolase subunit GatZ (420 aa).

It belongs to the GatZ/KbaZ family. GatZ subfamily. In terms of assembly, forms a complex with GatY.

It participates in carbohydrate metabolism; D-tagatose 6-phosphate degradation; D-glyceraldehyde 3-phosphate and glycerone phosphate from D-tagatose 6-phosphate: step 2/2. In terms of biological role, component of the tagatose-1,6-bisphosphate aldolase GatYZ that is required for full activity and stability of the Y subunit. Could have a chaperone-like function for the proper and stable folding of GatY. When expressed alone, GatZ does not show any aldolase activity. Is involved in the catabolism of galactitol. The chain is D-tagatose-1,6-bisphosphate aldolase subunit GatZ from Shigella boydii serotype 18 (strain CDC 3083-94 / BS512).